A 548-amino-acid polypeptide reads, in one-letter code: Protein GPR108 (548 aa).

The N-terminal stretch at 1–32 is a signal peptide; it reads MAVSERRGLGRGSPAEWGPWLLLLLLLGGSSG. Asn-57, Asn-63, and Asn-109 each carry an N-linked (GlcNAc...) asparagine glycan. The interval 165-190 is disordered; the sequence is DHAGTTAAPDKAKSKPTGLQGDRQGV. N-linked (GlcNAc...) asparagine glycans are attached at residues Asn-205 and Asn-209. A run of 7 helical transmembrane segments spans residues 268 to 288, 297 to 317, 341 to 361, 372 to 392, 406 to 426, 454 to 474, and 478 to 498; these read LYMV…SILC, IHWL…FHSI, LLKG…WAFV, IFGI…VMES, ILFL…VWSI, VMVI…RAVV, and WQWL…VLTG. An N-linked (GlcNAc...) asparagine glycan is attached at Asn-539.

It belongs to the LU7TM family.

It is found in the golgi apparatus. The protein resides in the cis-Golgi network membrane. Its subcellular location is the trans-Golgi network membrane. The protein localises to the golgi apparatus membrane. Its function is as follows. May play a role in intracellular immune modulation by activating NF-kappaB response and attenuating Toll-like-receptor response. In Bos taurus (Bovine), this protein is Protein GPR108 (GPR108).